We begin with the raw amino-acid sequence, 193 residues long: 7-methyl-GTP pyrophosphatase (193 aa).

Asp70 (proton acceptor) is an active-site residue.

The protein belongs to the Maf family. YceF subfamily. A divalent metal cation is required as a cofactor.

Its subcellular location is the cytoplasm. The enzyme catalyses N(7)-methyl-GTP + H2O = N(7)-methyl-GMP + diphosphate + H(+). In terms of biological role, nucleoside triphosphate pyrophosphatase that hydrolyzes 7-methyl-GTP (m(7)GTP). May have a dual role in cell division arrest and in preventing the incorporation of modified nucleotides into cellular nucleic acids. This is 7-methyl-GTP pyrophosphatase from Aliivibrio fischeri (strain ATCC 700601 / ES114) (Vibrio fischeri).